A 352-amino-acid chain; its full sequence is AP2/ERF and B3 domain-containing transcription factor At1g51120 (352 aa).

The tract at residues 1–20 (MDEMSNVAKTTTETSGLTDS) is disordered. The span at 7–20 (VAKTTTETSGLTDS) shows a compositional bias: polar residues. The segment at residues 46–103 (KFKGVVQQQNGHWGAQIYADHRRIWLGTFKSAHEAAAAYDSASIKLRSFDANSHRNFP) is a DNA-binding region (AP2/ERF). Positions 178-297 (FQKELTPSDV…KTFLMIDVHH (120 aa)) form a DNA-binding region, TF-B3.

Belongs to the AP2/ERF transcription factor family. RAV subfamily.

It localises to the nucleus. Probably acts as a transcriptional activator. Binds to the GCC-box pathogenesis-related promoter element. May be involved in the regulation of gene expression by stress factors and by components of stress signal transduction pathways. This is AP2/ERF and B3 domain-containing transcription factor At1g51120 from Arabidopsis thaliana (Mouse-ear cress).